Reading from the N-terminus, the 195-residue chain is Imidazoleglycerol-phosphate dehydratase (195 aa).

The protein belongs to the imidazoleglycerol-phosphate dehydratase family.

The protein localises to the cytoplasm. The enzyme catalyses D-erythro-1-(imidazol-4-yl)glycerol 3-phosphate = 3-(imidazol-4-yl)-2-oxopropyl phosphate + H2O. It participates in amino-acid biosynthesis; L-histidine biosynthesis; L-histidine from 5-phospho-alpha-D-ribose 1-diphosphate: step 6/9. This Burkholderia ambifaria (strain MC40-6) protein is Imidazoleglycerol-phosphate dehydratase.